Reading from the N-terminus, the 437-residue chain is Serine--tRNA ligase (437 aa).

Residue 240–242 (TAE) coordinates L-serine. Residue 271 to 273 (RAE) participates in ATP binding. Position 294 (glutamate 294) interacts with L-serine. An ATP-binding site is contributed by 358–361 (EISS). Serine 394 is a binding site for L-serine.

It belongs to the class-II aminoacyl-tRNA synthetase family. Type-1 seryl-tRNA synthetase subfamily. As to quaternary structure, homodimer. The tRNA molecule binds across the dimer.

The protein localises to the cytoplasm. It catalyses the reaction tRNA(Ser) + L-serine + ATP = L-seryl-tRNA(Ser) + AMP + diphosphate + H(+). The catalysed reaction is tRNA(Sec) + L-serine + ATP = L-seryl-tRNA(Sec) + AMP + diphosphate + H(+). It functions in the pathway aminoacyl-tRNA biosynthesis; selenocysteinyl-tRNA(Sec) biosynthesis; L-seryl-tRNA(Sec) from L-serine and tRNA(Sec): step 1/1. Functionally, catalyzes the attachment of serine to tRNA(Ser). Is also able to aminoacylate tRNA(Sec) with serine, to form the misacylated tRNA L-seryl-tRNA(Sec), which will be further converted into selenocysteinyl-tRNA(Sec). In Methylobacterium nodulans (strain LMG 21967 / CNCM I-2342 / ORS 2060), this protein is Serine--tRNA ligase.